A 3567-amino-acid polypeptide reads, in one-letter code: Erythronolide synthase EryA2 (3567 aa).

The Ketosynthase family 3 (KS3) 1 domain maps to 30–455 (SDPIAIVSMA…GTNAHVIVEE (426 aa)). Module stretches follow at residues 33–1467 (IAIV…QHLR) and 1491–3485 (IAIV…EHLR). Cys-202 (acyl-thioester intermediate; for beta-ketoacyl synthase 1 activity) is an active-site residue. Catalysis depends on for beta-ketoacyl synthase 1 activity residues His-337 and His-377. The interval 560 to 880 (VFLFPGQGSQ…MATAHVSGVD (321 aa)) is acyltransferase 1. Ser-651 serves as the catalytic Acyl-ester intermediate; for acyltransferase 1 activity. Positions 1132 to 1297 (GTVLVTGAAS…CTSVAWTPWA (166 aa)) are C2-type beta-ketoacyl reductase 1. The active-site For C2-type beta-ketoacyl reductase 1 and probable racemase activity is the Tyr-1267. The segment at 1364-1385 (GRGGQAEAEPDSGPTGEPAQRL) is disordered. Residues 1395–1470 (ENLLELVANA…ALAQHLRARL (76 aa)) form the Carrier 1 domain. At Ser-1430 the chain carries O-(pantetheine 4'-phosphoryl)serine. Residues 1488–1912 (SEPIAIVGIG…GTNAHVIVEE (425 aa)) form the Ketosynthase family 3 (KS3) 2 domain. The active-site Acyl-thioester intermediate; for beta-ketoacyl synthase 2 activity is Cys-1661. Catalysis depends on for beta-ketoacyl synthase 2 activity residues His-1796 and His-1834. The acyltransferase 2 stretch occupies residues 2015-2331 (LVFPGQGAQW…NLLRAHVHGV (317 aa)). Ser-2105 functions as the Acyl-ester intermediate; for acyltransferase 2 activity in the catalytic mechanism. The segment at 2377 to 2502 (HPLLLAAVDV…GTLAQGVAAG (126 aa)) is N-terminal hotdog fold. The dehydratase stretch occupies residues 2377 to 2645 (HPLLLAAVDV…SLVVRSTGEK (269 aa)). Positions 2377 to 2648 (HPLLLAAVDV…VRSTGEKWEQ (272 aa)) constitute a PKS/mFAS DH domain. His-2409 functions as the Proton acceptor; for dehydratase activity in the catalytic mechanism. A C-terminal hotdog fold region spans residues 2514-2648 (AVRIPLDDHY…VRSTGEKWEQ (135 aa)). The active-site Proton donor; for dehydratase activity is Asp-2571. Positions 2831–3131 (GAIDSVAFEP…RGRHVGKLVL (301 aa)) are enoyl reductase. Tyr-2874 (for enoyl reductase activity) is an active-site residue. NADP(+)-binding positions include 2964–2973 (HAAAGGVGMA), 3149–3152 (TGTL), 3173–3176 (SRRG), 3202–3203 (DT), Lys-3250, and 3272–3273 (FS). The segment at 3141-3317 (GTVLITGGTG…AKALGWGLWA (177 aa)) is beta-ketoacyl reductase 2. Tyr-3287 (for beta-ketoacyl reductase 2 activity) is an active-site residue. In terms of domain architecture, Carrier 2 spans 3413 to 3488 (AGLAELVRSH…AVAEHLRDRL (76 aa)). Ser-3448 bears the O-(pantetheine 4'-phosphoryl)serine mark.

As to quaternary structure, homodimer. Erythronolide synthase is composed of EryAI, EryAII and EryAIII multimodular (2 modules) polypeptides each coding for a functional synthase subunit which participates in 2 of the six FAS-like elongation steps required for formation of the polyketide. Module 1, 2, 3, 4, 5, and 6 participating in biosynthesis steps 1, 2, 3, 4, 5, and 6, respectively. The cofactor is pantetheine 4'-phosphate.

It catalyses the reaction 6 (S)-methylmalonyl-CoA + propanoyl-CoA + 6 NADPH + 12 H(+) = 6-deoxyerythronolide B + 6 CO2 + 6 NADP(+) + 7 CoA + H2O. It participates in antibiotic biosynthesis; erythromycin biosynthesis. In terms of biological role, involved in the biosynthesis of antibiotic erythromycin via the biosynthesis of its aglycone precursor, 6-deoxyerythronolide B (6-dEB). This Saccharopolyspora erythraea (Streptomyces erythraeus) protein is Erythronolide synthase EryA2.